The following is a 613-amino-acid chain: Penicillin-binding protein activator LpoA (613 aa).

The N-terminal stretch at 1–29 is a signal peptide; that stretch reads MNSMLNFTHKRKSVSRLLAPVALAVILAG. The N-palmitoyl cysteine moiety is linked to residue Cys30. Cys30 is lipidated: S-diacylglycerol cysteine.

It belongs to the LpoA family. As to quaternary structure, interacts with PBP1a.

The protein localises to the cell outer membrane. In terms of biological role, regulator of peptidoglycan synthesis that is essential for the function of penicillin-binding protein 1A (PBP1a). The protein is Penicillin-binding protein activator LpoA of Photobacterium profundum (strain SS9).